The primary structure comprises 59 residues: Preprotein translocase subunit SecG (59 aa).

The Cytoplasmic segment spans residues 1-33 (MARRESSGGSGGLMSSAGLMRYFEAEESAIKID). A helical transmembrane segment spans residues 34-55 (PKTVIIAAVASGAFIWILNFTY). Residues 56–59 (GRFW) are Extracellular-facing.

The protein belongs to the SEC61-beta family. Component of the protein translocase complex. Heterotrimer consisting of alpha (SecY), beta (SecG) and gamma (SecE) subunits. Can form oligomers of the heterotrimer.

Its subcellular location is the cell membrane. Its function is as follows. Involved in protein export. The function of the beta subunit is unknown, but it may be involved in stabilization of the trimeric complex. The protein is Preprotein translocase subunit SecG of Methanocella arvoryzae (strain DSM 22066 / NBRC 105507 / MRE50).